The following is a 158-amino-acid chain: Small ribosomal subunit protein uS7c (158 aa).

Belongs to the universal ribosomal protein uS7 family. Part of the 30S ribosomal subunit.

Its subcellular location is the plastid. The protein resides in the chloroplast. One of the primary rRNA binding proteins, it binds directly to 16S rRNA where it nucleates assembly of the head domain of the 30S subunit. In Trieres chinensis (Marine centric diatom), this protein is Small ribosomal subunit protein uS7c (rps7).